Consider the following 321-residue polypeptide: Phospho-N-acetylmuramoyl-pentapeptide-transferase (321 aa).

A run of 10 helical transmembrane segments spans residues 1 to 21, 50 to 70, 76 to 96, 112 to 132, 140 to 160, 176 to 196, 200 to 220, 225 to 245, 250 to 270, and 300 to 320; these read MIFV…PVLI, MGGL…IIFV, IILL…DDYI, FLAQ…FHLV, IPFT…IVFW, GLAT…SFVL, AIGI…PYNI, VFMG…ISIM, LSLI…MLQV, and VVTV…WIGV.

Belongs to the glycosyltransferase 4 family. MraY subfamily. Mg(2+) serves as cofactor.

Its subcellular location is the cell membrane. The enzyme catalyses UDP-N-acetyl-alpha-D-muramoyl-L-alanyl-gamma-D-glutamyl-L-lysyl-D-alanyl-D-alanine + di-trans,octa-cis-undecaprenyl phosphate = Mur2Ac(oyl-L-Ala-gamma-D-Glu-L-Lys-D-Ala-D-Ala)-di-trans,octa-cis-undecaprenyl diphosphate + UMP. It participates in cell wall biogenesis; peptidoglycan biosynthesis. Functionally, catalyzes the initial step of the lipid cycle reactions in the biosynthesis of the cell wall peptidoglycan: transfers peptidoglycan precursor phospho-MurNAc-pentapeptide from UDP-MurNAc-pentapeptide onto the lipid carrier undecaprenyl phosphate, yielding undecaprenyl-pyrophosphoryl-MurNAc-pentapeptide, known as lipid I. The polypeptide is Phospho-N-acetylmuramoyl-pentapeptide-transferase (Staphylococcus aureus (strain Mu50 / ATCC 700699)).